Consider the following 225-residue polypeptide: MHNRGMSSPSSPLSSSIADLRKSYERAELGEEASHADPLRQFDQWLQEAVAAQVPEPNAMTLATVGADLRPSTRVVLIKGYDERGIVWYTNYGSRKGRQLAGNPFAALQFHWVELERVVRIEGRVEKVSDAESDAYFASRPLDSRIGAWASPQSEVISGRGVLVANAAKYGAQFLLQPLRPPHWGGFRLKPDRWEFWQGRKSRLHDRLCYREETPGAWVRERLAP.

Substrate contacts are provided by residues 21-24 (RKSY) and Lys79. Residues 74–79 (RVVLIK), 89–90 (YT), Arg95, and Lys96 each bind FMN. Substrate is bound by residues Tyr136, Arg140, and Ser144. Residues 153 to 154 (QS) and Trp197 contribute to the FMN site. Position 203 to 205 (203 to 205 (RLH)) interacts with substrate. Arg207 lines the FMN pocket.

The protein belongs to the pyridoxamine 5'-phosphate oxidase family. In terms of assembly, homodimer. Requires FMN as cofactor.

The enzyme catalyses pyridoxamine 5'-phosphate + O2 + H2O = pyridoxal 5'-phosphate + H2O2 + NH4(+). The catalysed reaction is pyridoxine 5'-phosphate + O2 = pyridoxal 5'-phosphate + H2O2. The protein operates within cofactor metabolism; pyridoxal 5'-phosphate salvage; pyridoxal 5'-phosphate from pyridoxamine 5'-phosphate: step 1/1. It functions in the pathway cofactor metabolism; pyridoxal 5'-phosphate salvage; pyridoxal 5'-phosphate from pyridoxine 5'-phosphate: step 1/1. Its function is as follows. Catalyzes the oxidation of either pyridoxine 5'-phosphate (PNP) or pyridoxamine 5'-phosphate (PMP) into pyridoxal 5'-phosphate (PLP). The chain is Pyridoxine/pyridoxamine 5'-phosphate oxidase from Paracidovorax citrulli (strain AAC00-1) (Acidovorax citrulli).